We begin with the raw amino-acid sequence, 223 residues long: Ribose-5-phosphate isomerase A (223 aa).

Residues 32-35 (TGST), 85-88 (DGAD), and 98-101 (KGGG) each bind substrate. Catalysis depends on E107, which acts as the Proton acceptor. Residue K125 participates in substrate binding.

The protein belongs to the ribose 5-phosphate isomerase family. Homodimer.

The catalysed reaction is aldehydo-D-ribose 5-phosphate = D-ribulose 5-phosphate. It functions in the pathway carbohydrate degradation; pentose phosphate pathway; D-ribose 5-phosphate from D-ribulose 5-phosphate (non-oxidative stage): step 1/1. Catalyzes the reversible conversion of ribose-5-phosphate to ribulose 5-phosphate. The chain is Ribose-5-phosphate isomerase A from Marinomonas sp. (strain MWYL1).